Reading from the N-terminus, the 347-residue chain is MRPIVLKGHERPLTQVKFNRDGDLVFACSKDSVASIWYAINGERLGTLDDHSGTIWSIDVDESTTYALTGGADFCFKIWKVATGVAVHSVSTRSPVLRVEFSPDGSKLLIVLDAVMGHIGSIVVYSLIRNENGEIVNVKEEPDYEITTIEQATKVFVASWSYNGKYIIAGHEDGQISAYYGENGEFVQAKKIHEKSIKDIQFSPDRTYFITSSRDSVASLVDVDTFEVLKTYKADCPLNSASITPLKEFVILGGGQDAKDVTTTSAREGKFEARIYHKVFQDEIGRVKGHFGPLNYVAVSPTGTSYASGGEDGYIRLHHFDKSYFDFKYDVEKTFEVERRQQLQKQE.

5 WD repeats span residues 8–47 (GHER…RLGT), 50–89 (DHSG…AVHS), 150–190 (EQAT…VQAK), 192–233 (IHEK…KTYK), and 289–328 (GHFG…FDFK).

It belongs to the eIF-3 subunit I family. As to quaternary structure, component of the eukaryotic translation initiation factor 3 (eIF-3) complex.

The protein resides in the cytoplasm. Component of the eukaryotic translation initiation factor 3 (eIF-3) complex, which is involved in protein synthesis of a specialized repertoire of mRNAs and, together with other initiation factors, stimulates binding of mRNA and methionyl-tRNAi to the 40S ribosome. The eIF-3 complex specifically targets and initiates translation of a subset of mRNAs involved in cell proliferation. This is Eukaryotic translation initiation factor 3 subunit I from Kluyveromyces lactis (strain ATCC 8585 / CBS 2359 / DSM 70799 / NBRC 1267 / NRRL Y-1140 / WM37) (Yeast).